The primary structure comprises 273 residues: Diaminopimelate epimerase (273 aa).

Residues asparagine 11 and asparagine 60 each coordinate substrate. Cysteine 69 (proton donor) is an active-site residue. Residues 70 to 71 (GN), asparagine 181, and 199 to 200 (ER) contribute to the substrate site. Cysteine 209 acts as the Proton acceptor in catalysis. Residue 210 to 211 (GT) participates in substrate binding.

Belongs to the diaminopimelate epimerase family. In terms of assembly, homodimer.

The protein localises to the cytoplasm. The catalysed reaction is (2S,6S)-2,6-diaminopimelate = meso-2,6-diaminopimelate. It functions in the pathway amino-acid biosynthesis; L-lysine biosynthesis via DAP pathway; DL-2,6-diaminopimelate from LL-2,6-diaminopimelate: step 1/1. In terms of biological role, catalyzes the stereoinversion of LL-2,6-diaminopimelate (L,L-DAP) to meso-diaminopimelate (meso-DAP), a precursor of L-lysine and an essential component of the bacterial peptidoglycan. This is Diaminopimelate epimerase from Helicobacter pylori (strain Shi470).